The following is a 516-amino-acid chain: 7-chloro-L-tryptophan 6-halogenase KtzR (516 aa).

FAD contacts are provided by Gly-6, Thr-8, Ala-9, Glu-42, and Ala-43. Lys-71 is a catalytic residue. Residue Val-195 coordinates FAD. Thr-357 and Gly-358 together coordinate chloride. Ile-359 lines the FAD pocket.

The protein belongs to the flavin-dependent halogenase family. Bacterial tryptophan halogenase subfamily.

The enzyme catalyses 7-chloro-L-tryptophan + FADH2 + chloride + O2 = 6,7-dichloro-L-tryptophan + FAD + 2 H2O. Involved in the biosynthesis of kutznerides, actinomycete-derived antifungal and antimicrobial cyclic hexadepsipeptides. Together with KtzQ, catalyzes the regiospecific dichlorination of L-tryptophan (L-Trp) to produce 6,7-dichloro-L-tryptophan. KtzR catalyzes the chlorination of 7-chloro-L-tryptophan at C6 position to yield 6,7-dichloro-L-tryptophan. Can also use L-Trp as substrate and form 6-chloro-L-tryptophan, but has a 120-fold preference for 7-chloro-L-tryptophan over L-Trp. Cannot use piperazic acid or gamma,delta-dehydropiperazic acid. The protein is 7-chloro-L-tryptophan 6-halogenase KtzR of Kutzneria sp. (strain 744).